The following is a 150-amino-acid chain: Ribonuclease H (150 aa).

Residues 1 to 141 enclose the RNase H type-1 domain; sequence MKFIEVHTDG…VDVLARNQAI (141 aa). Residues Asp9, Glu47, Asp69, and Asp133 each contribute to the Mg(2+) site.

This sequence belongs to the RNase H family. As to quaternary structure, monomer. It depends on Mg(2+) as a cofactor.

The protein localises to the cytoplasm. The enzyme catalyses Endonucleolytic cleavage to 5'-phosphomonoester.. In terms of biological role, endonuclease that specifically degrades the RNA of RNA-DNA hybrids. The protein is Ribonuclease H of Xanthomonas euvesicatoria pv. vesicatoria (strain 85-10) (Xanthomonas campestris pv. vesicatoria).